The primary structure comprises 209 residues: Virulence factors putative positive transcription regulator BvgA (209 aa).

The Response regulatory domain occupies Lys-4–Met-119. Residue Asp-54 is modified to 4-aspartylphosphate. In terms of domain architecture, HTH luxR-type spans Asp-142–Asn-207. Residues Asn-166–Thr-185 constitute a DNA-binding region (H-T-H motif).

As to quaternary structure, homodimer. Phosphorylated by BvgS.

Member of the two-component regulatory system BvgS/BvgA. Activates the transcription of virulence genes. The protein is Virulence factors putative positive transcription regulator BvgA (bvgA) of Bordetella bronchiseptica (strain ATCC BAA-588 / NCTC 13252 / RB50) (Alcaligenes bronchisepticus).